The primary structure comprises 227 residues: Large ribosomal subunit protein uL3 (227 aa).

The protein belongs to the universal ribosomal protein uL3 family. In terms of assembly, part of the 50S ribosomal subunit. Forms a cluster with proteins L14 and L19.

One of the primary rRNA binding proteins, it binds directly near the 3'-end of the 23S rRNA, where it nucleates assembly of the 50S subunit. The protein is Large ribosomal subunit protein uL3 of Leuconostoc citreum (strain KM20).